We begin with the raw amino-acid sequence, 289 residues long: uncharacterized protein (289 aa).

Residues Pro80–Asn96 are compositionally biased toward polar residues. Disordered stretches follow at residues Pro80–Tyr101 and Pro136–Glu157.

This is an uncharacterized protein from Acanthamoeba polyphaga (Amoeba).